Here is a 127-residue protein sequence, read N- to C-terminus: DNA-directed RNA polymerase subunit omega (127 aa).

Belongs to the RNA polymerase subunit omega family. The RNAP catalytic core consists of 2 alpha, 1 beta, 1 beta' and 1 omega subunit. When a sigma factor is associated with the core the holoenzyme is formed, which can initiate transcription.

The catalysed reaction is RNA(n) + a ribonucleoside 5'-triphosphate = RNA(n+1) + diphosphate. Its function is as follows. Promotes RNA polymerase assembly. Latches the N- and C-terminal regions of the beta' subunit thereby facilitating its interaction with the beta and alpha subunits. This Rickettsia canadensis (strain McKiel) protein is DNA-directed RNA polymerase subunit omega.